A 43-amino-acid polypeptide reads, in one-letter code: KPHRYRPGTVALRSTELLIRKLPFQREIAQDFKTDLRDIQLAR.

As to quaternary structure, the nucleosome is a histone octamer containing two molecules each of H2A, H2B, H3 and H4 assembled in one H3-H4 heterotetramer and two H2A-H2B heterodimers. The octamer wraps approximately 147 bp of DNA.

The protein localises to the nucleus. It localises to the chromosome. Core component of nucleosome. Nucleosomes wrap and compact DNA into chromatin, limiting DNA accessibility to the cellular machineries which require DNA as a template. Histones thereby play a central role in transcription regulation, DNA repair, DNA replication and chromosomal stability. DNA accessibility is regulated via a complex set of post-translational modifications of histones, also called histone code, and nucleosome remodeling. The chain is Histone H3 from Penaeus vannamei (Whiteleg shrimp).